Reading from the N-terminus, the 404-residue chain is Druantia protein DruA (404 aa).

The protein localises to the cytoplasm. In terms of biological role, component of antiviral defense system Druantia type I, composed of DruA, DruB, DruC, DruD and DruE. Expression of Druantia in E.coli (strain MG1655) confers resistance to phage lambda, SECphi18, SECphi27 and T4. This is Druantia protein DruA from Escherichia coli (strain UMEA 4076-1).